A 386-amino-acid chain; its full sequence is Probable mannan endo-1,4-beta-mannosidase A (386 aa).

The first 21 residues, 1–21, serve as a signal peptide directing secretion; sequence MKLNPSLLTAAGLVSAQLASA. Substrate is bound by residues Trp95 and Asn207. The Proton donor role is filled by Glu208. Tyr283 is a substrate binding site. Glu316 (nucleophile) is an active-site residue. Asn336 carries N-linked (GlcNAc...) asparagine glycosylation. Trp346 provides a ligand contact to substrate.

This sequence belongs to the glycosyl hydrolase 5 (cellulase A) family.

It localises to the secreted. It carries out the reaction Random hydrolysis of (1-&gt;4)-beta-D-mannosidic linkages in mannans, galactomannans and glucomannans.. Endo-1,4-mannanase, a crucial enzyme for depolymerization of seed galactomannans and wood galactoglucomannans. The polypeptide is Probable mannan endo-1,4-beta-mannosidase A (manA) (Aspergillus flavus (strain ATCC 200026 / FGSC A1120 / IAM 13836 / NRRL 3357 / JCM 12722 / SRRC 167)).